We begin with the raw amino-acid sequence, 599 residues long: Putative sensor histidine kinase NtrY-like (599 aa).

4 consecutive transmembrane segments (helical) span residues 17–37 (VLIF…FYVI), 44–64 (FSTI…LGVL), 85–105 (IVIA…VFSV), and 285–305 (IMFI…GVIF). The HAMP domain maps to 307 to 361 (AKIVKPIKKLVTATDKVKDGDLTVQVPENEVDKDEIGTLYAAFNRMIKQLSRQQR). One can recognise a Histidine kinase domain in the interval 378–589 (KVAHEIKNPL…IIDIKFDLKK (212 aa)). A Phosphohistidine; by autocatalysis modification is found at His381.

The protein localises to the cell membrane. The catalysed reaction is ATP + protein L-histidine = ADP + protein N-phospho-L-histidine.. Its function is as follows. Member of the two-component regulatory system RF_0427/RF_0895. The sequence is that of Putative sensor histidine kinase NtrY-like from Rickettsia felis (strain ATCC VR-1525 / URRWXCal2) (Rickettsia azadi).